We begin with the raw amino-acid sequence, 98 residues long: NADH-ubiquinone oxidoreductase chain 4L (98 aa).

Helical transmembrane passes span Met-1–Val-21, Ser-29–Leu-49, and Ile-58–Leu-78.

The protein belongs to the complex I subunit 4L family. Core subunit of respiratory chain NADH dehydrogenase (Complex I) which is composed of 45 different subunits.

Its subcellular location is the mitochondrion inner membrane. The catalysed reaction is a ubiquinone + NADH + 5 H(+)(in) = a ubiquinol + NAD(+) + 4 H(+)(out). Its function is as follows. Core subunit of the mitochondrial membrane respiratory chain NADH dehydrogenase (Complex I) which catalyzes electron transfer from NADH through the respiratory chain, using ubiquinone as an electron acceptor. Part of the enzyme membrane arm which is embedded in the lipid bilayer and involved in proton translocation. The protein is NADH-ubiquinone oxidoreductase chain 4L (MT-ND4L) of Pongo abelii (Sumatran orangutan).